Here is an 89-residue protein sequence, read N- to C-terminus: Small ribosomal subunit protein uS15 (89 aa).

It belongs to the universal ribosomal protein uS15 family. Part of the 30S ribosomal subunit. Forms a bridge to the 50S subunit in the 70S ribosome, contacting the 23S rRNA.

Its function is as follows. One of the primary rRNA binding proteins, it binds directly to 16S rRNA where it helps nucleate assembly of the platform of the 30S subunit by binding and bridging several RNA helices of the 16S rRNA. In terms of biological role, forms an intersubunit bridge (bridge B4) with the 23S rRNA of the 50S subunit in the ribosome. This chain is Small ribosomal subunit protein uS15, found in Exiguobacterium sp. (strain ATCC BAA-1283 / AT1b).